A 403-amino-acid chain; its full sequence is Shaggy-related protein kinase GSK4 (403 aa).

The region spanning 71–355 (YMAERVVGTG…ALEACAHSFF (285 aa)) is the Protein kinase domain. ATP contacts are provided by residues 77-85 (VGTGSFGVV) and Lys-100. Residue Asp-196 is the Proton acceptor of the active site.

Belongs to the protein kinase superfamily. CMGC Ser/Thr protein kinase family. GSK-3 subfamily. In terms of assembly, interacts with LIC.

The enzyme catalyses L-seryl-[protein] + ATP = O-phospho-L-seryl-[protein] + ADP + H(+). The catalysed reaction is L-threonyl-[protein] + ATP = O-phospho-L-threonyl-[protein] + ADP + H(+). Its function is as follows. Probable serine-threonine kinase that may regulate brassinosteroid signaling. The protein is Shaggy-related protein kinase GSK4 of Oryza sativa subsp. japonica (Rice).